Reading from the N-terminus, the 358-residue chain is Metacaspase-3 (358 aa).

The segment at 1–84 (MGFDFGCLLK…APTHVSGTFR (84 aa)) is important for catalytic activity. Active-site residues include histidine 168 and cysteine 223.

It belongs to the peptidase C14B family. Post-translationally, in epimastigotes, the unprocessed enzyme appears to be the main form. Auto-processing is dispensable for catalytic activity towards small oligopeptide substrates.

The protein resides in the cytoplasm. Its subcellular location is the nucleus. Activated by Ca(2+). Its function is as follows. Cysteine protease that cleaves specifically after arginine or lysine residues. In epimastigotes, may play a role in cell cycle G1/S transition. This Trypanosoma cruzi (strain CL Brener) protein is Metacaspase-3.